A 409-amino-acid polypeptide reads, in one-letter code: Na(+)-translocating NADH-quinone reductase subunit F (409 aa).

The chain crosses the membrane as a helical span at residues 5 to 25 (FIFGIGAFTAIVLVLAVVILI). Residues 34–128 (GDITISINDD…SMDVELPEEV (95 aa)) form the 2Fe-2S ferredoxin-type domain. [2Fe-2S] cluster is bound by residues Cys71, Cys77, Cys80, and Cys112. Positions 131–271 (VKKWECTVIS…SGPFGEFFAK (141 aa)) constitute an FAD-binding FR-type domain.

The protein belongs to the NqrF family. As to quaternary structure, composed of six subunits; NqrA, NqrB, NqrC, NqrD, NqrE and NqrF. The cofactor is [2Fe-2S] cluster. Requires FAD as cofactor.

The protein localises to the cell inner membrane. It carries out the reaction a ubiquinone + n Na(+)(in) + NADH + H(+) = a ubiquinol + n Na(+)(out) + NAD(+). Its function is as follows. NQR complex catalyzes the reduction of ubiquinone-1 to ubiquinol by two successive reactions, coupled with the transport of Na(+) ions from the cytoplasm to the periplasm. The first step is catalyzed by NqrF, which accepts electrons from NADH and reduces ubiquinone-1 to ubisemiquinone by a one-electron transfer pathway. In Actinobacillus succinogenes (strain ATCC 55618 / DSM 22257 / CCUG 43843 / 130Z), this protein is Na(+)-translocating NADH-quinone reductase subunit F.